A 373-amino-acid chain; its full sequence is Ribosomal protein uL16 3-hydroxylase (373 aa).

The JmjC domain occupies 92 to 219; that stretch reads PTAALMRPFR…LISGFADYVL (128 aa). Residues serine 114, 125–127, arginine 140, and histidine 187 contribute to the substrate site; that span reads HLD. 2 residues coordinate Fe cation: histidine 125 and aspartate 127. Histidine 187 contributes to the Fe cation binding site.

It belongs to the ROX family. RoxA/YcfD subfamily. In terms of assembly, homodimer. It depends on Fe(2+) as a cofactor.

The catalysed reaction is L-arginyl-[ribosomal protein uL16] + 2-oxoglutarate + O2 = (3R)-3-hydroxy-L-arginyl-[ribosomal protein uL16] + succinate + CO2. Functionally, growth-regulating oxygenase that catalyzes the hydroxylation of ribosomal protein uL16 on 'Arg-81'. The chain is Ribosomal protein uL16 3-hydroxylase (roxA) from Escherichia coli (strain K12).